The primary structure comprises 252 residues: Large ribosomal subunit protein uL29m (252 aa).

K146 is subject to N6-acetyllysine.

It belongs to the universal ribosomal protein uL29 family. As to quaternary structure, component of the mitochondrial ribosome large subunit (39S) which comprises a 16S rRNA and about 50 distinct proteins.

It localises to the mitochondrion. The polypeptide is Large ribosomal subunit protein uL29m (MRPL47) (Bos taurus (Bovine)).